Consider the following 548-residue polypeptide: Rhodopsin kinase GRK7 (548 aa).

Ser-34 is modified (phosphoserine; by PKA). In terms of domain architecture, RGS spans 54 to 171; that stretch reads FHSLCEQQPI…LASPFYDRFL (118 aa). Residues 186–449 enclose the Protein kinase domain; it reads FTEFRVLGKG…ADDPRKHPFF (264 aa). Residues 192–200 and Lys-215 each bind ATP; that span reads LGKGGFGEV. The Proton acceptor role is filled by Asp-311. Residues 450–515 form the AGC-kinase C-terminal domain; sequence QTVNFPRLEA…GAVPVAWQEE (66 aa). The interval 523 to 548 is disordered; sequence EELNDPNRPSGDGKGDSSKSGVCLLL. The residue at position 545 (Cys-545) is a Cysteine methyl ester. Cys-545 is lipidated: S-geranylgeranyl cysteine. Positions 546-548 are cleaved as a propeptide — removed in mature form; it reads LLL.

Belongs to the protein kinase superfamily. AGC Ser/Thr protein kinase family. GPRK subfamily. In terms of assembly, interacts (when prenylated) with PDE6D; this promotes release from membranes. Post-translationally, autophosphorylated. Phosphorylation at Ser-34 is regulated by light and activated by cAMP. Retina. Cones and rod.

It is found in the membrane. It carries out the reaction L-threonyl-[rhodopsin] + ATP = O-phospho-L-threonyl-[rhodopsin] + ADP + H(+). The catalysed reaction is L-seryl-[rhodopsin] + ATP = O-phospho-L-seryl-[rhodopsin] + ADP + H(+). Its activity is regulated as follows. Inhibited by phosphorylation of Ser-34. Its function is as follows. Retina-specific kinase involved in the shutoff of the photoresponse and adaptation to changing light conditions via cone opsin phosphorylation, including rhodopsin (RHO). The polypeptide is Rhodopsin kinase GRK7 (GRK7) (Ictidomys tridecemlineatus (Thirteen-lined ground squirrel)).